Here is a 212-residue protein sequence, read N- to C-terminus: MQSEESIMTDLATSEIPETDPFALFAEWMEEARASELNDPNAMALATATPDGAPSVRMVLLKDHGPQGFTFYTNAESRKGEEIRANAQTALLFHWKSLRRQIRVEGPVREVAPEVADAYFHSRARESQLGAVASDQSRPLEDRRVFVDRFRAAQERFDEGEVERPAYWTGFTVTPQRIEFWCDRPNRLHDRRLFTLSGAGDALSWTSTLLYP.

FMN contacts are provided by residues 57 to 62 (RMVLLK), 72 to 73 (YT), R78, K79, and Q101. K62 provides a ligand contact to substrate. Positions 119, 123, and 127 each coordinate substrate. Residues 136–137 (QS) and W181 contribute to the FMN site. 187-189 (RLH) lines the substrate pocket. Residue R191 coordinates FMN.

Belongs to the pyridoxamine 5'-phosphate oxidase family. As to quaternary structure, homodimer. It depends on FMN as a cofactor.

The catalysed reaction is pyridoxamine 5'-phosphate + O2 + H2O = pyridoxal 5'-phosphate + H2O2 + NH4(+). It catalyses the reaction pyridoxine 5'-phosphate + O2 = pyridoxal 5'-phosphate + H2O2. It functions in the pathway cofactor metabolism; pyridoxal 5'-phosphate salvage; pyridoxal 5'-phosphate from pyridoxamine 5'-phosphate: step 1/1. The protein operates within cofactor metabolism; pyridoxal 5'-phosphate salvage; pyridoxal 5'-phosphate from pyridoxine 5'-phosphate: step 1/1. In terms of biological role, catalyzes the oxidation of either pyridoxine 5'-phosphate (PNP) or pyridoxamine 5'-phosphate (PMP) into pyridoxal 5'-phosphate (PLP). In Erythrobacter litoralis (strain HTCC2594), this protein is Pyridoxine/pyridoxamine 5'-phosphate oxidase.